The sequence spans 931 residues: Chitin synthase 7 (931 aa).

Disordered regions lie at residues 1-34 (MVRH…GHYR) and 56-92 (GDVG…ASSS). Polar residues-rich tracts occupy residues 7 to 28 (FTNS…TPYP) and 83 to 92 (PLTTGPASSS). The N-linked (GlcNAc...) asparagine glycan is linked to Asn536. Helical transmembrane passes span 573–593 (IFSL…FSII), 615–635 (INLV…VLAL), and 647–667 (ILTL…SIIL). N-linked (GlcNAc...) asparagine glycosylation is present at Asn691. Helical transmembrane passes span 695 to 715 (GVLV…SFLY) and 725 to 745 (FPQY…YAFC). A disordered region spans residues 763-789 (LPAISSSKQKDGETAVVEEQQRSQGEL). N-linked (GlcNAc...) asparagine glycosylation occurs at Asn819. Residues 826–846 (LVVVWLLTNAALAISIQTLNG) form a helical membrane-spanning segment. Asn866 and Asn874 each carry an N-linked (GlcNAc...) asparagine glycan. Residues 899 to 919 (AILWTTFALSMVRFIGCVFYW) traverse the membrane as a helical segment.

It belongs to the chitin synthase family. Class III subfamily.

Its subcellular location is the cell membrane. It carries out the reaction [(1-&gt;4)-N-acetyl-beta-D-glucosaminyl](n) + UDP-N-acetyl-alpha-D-glucosamine = [(1-&gt;4)-N-acetyl-beta-D-glucosaminyl](n+1) + UDP + H(+). Polymerizes chitin, a structural polymer of the cell wall and septum, by transferring the sugar moiety of UDP-GlcNAc to the non-reducing end of the growing chitin polymer. This Cryptococcus neoformans var. grubii serotype A (strain H99 / ATCC 208821 / CBS 10515 / FGSC 9487) (Filobasidiella neoformans var. grubii) protein is Chitin synthase 7.